A 133-amino-acid polypeptide reads, in one-letter code: MAEKAVTIRTRNFMTNRLLARKQFVIDVLHPGRANVSKAELKEKLARMYEVKDPNAIFCFKFRTHFGGGKSSGYGLIYDTVENAKKFEPKYRLIRNGLDTKIEKSRKQIKERKNRAKKIRGVKKTKAGDTKKK.

Positions 104–133 are disordered; it reads KSRKQIKERKNRAKKIRGVKKTKAGDTKKK. Basic residues predominate over residues 109–125; sequence IKERKNRAKKIRGVKKT.

This sequence belongs to the eukaryotic ribosomal protein eS24 family.

This Arabidopsis thaliana (Mouse-ear cress) protein is Small ribosomal subunit protein eS24y (RPS24B).